Reading from the N-terminus, the 843-residue chain is MSAGSRNKHSKFRNDDQLDISKEEFSRIKEALGNEEFRKLFFDYVDEIQDPANRKIYEEEITQLEKERGVEVRFIHPQPGFVVKTSLDGELKCFINIASSPEIEAPHNEVATNPENGNRGLSWYIPMAQTSSRDDADAKNNHCKVFDVVFHPDALHLAKRNSQFRKCLVDTALDAVEREYQVSLDRANLKFPKLDYKGIARPTVIRKLAENPTAEQLEPHPLQNIYPTAPPTSNPEPRVHPMKTKAAPVPEFTIPRYSIKHSHDVDLSEYTDELDAKLHVTVPRNLVVEIELPLLRSTAECQLDVTSKSVYLLSEKPGAKYRLKMDLPFTVDDKAGSARFDTDLRRLSITLPVVRSSVPQQRDMHDTLRHFSREDSGVELHSNSESPVEEEEADADLSDSKADTSETVTPTATPVHSAPTPFLKKSVHYQLPAKFDCNVLDNVMAFVLHVANVQPDSIEQLREQRSLHIQFATIGSGYYPTHYAFYVELPADEEGGSAIENVEAEAWDNNVVLKLCLSSQSKSPIRYMAGLDATDLNEYPVHGQYTVKPKRRDAQNKESAPLDVKFDHNKESLEVTIRPVPSATEEDEVEEQHEESHEEHQQHAQNKKPSKKQRKRNKKERSLSESACEDIVQEQHAENPAPPAKNFLKLPQRKQRSYSECNDSSVGSGASQRGILKRFSRYGPRPSMSDSCSSIDDYSSSYSCSVDASGASLFSQSFGGIPEEDRSDAGLSESCKKTVRFNDHITKQVFRLDSSILGQRKKNQKRRDLKLRAQQRRLSEGDSVDYEESRGDALKPQGKASNKGNKLHDSGLDLTGTAAGHGSHSDADAKNAMMFEMDEDDVM.

Disordered stretches follow at residues 212–242, 371–417, 545–672, and 761–843; these read PTAE…VHPM, FSRE…PVHS, YTVK…GASQ, and KKNQ…DDVM. S376 is subject to Phosphoserine. Acidic residues predominate over residues 387 to 397; that stretch reads PVEEEEADADL. Basic and acidic residues predominate over residues 564–573; that stretch reads VKFDHNKESL. Over residues 584–593 the composition is skewed to acidic residues; it reads TEEDEVEEQH. Residues 605–619 show a composition bias toward basic residues; that stretch reads QNKKPSKKQRKRNKK. The span at 658 to 671 shows a compositional bias: polar residues; that stretch reads YSECNDSSVGSGAS. Over residues 761-775 the composition is skewed to basic residues; it reads KKNQKRRDLKLRAQQ. The residue at position 779 (S779) is a Phosphoserine.

Belongs to the PIH1 family. Kintoun subfamily. Interacts with Pp1alpha-96A, Pp1-87B, Pp1-13C and flw.

It is found in the cytoplasm. Functionally, required for cytoplasmic pre-assembly of axonemal dyneins, thereby playing a central role in motility in cilia and flagella. Involved in pre-assembly of dynein arm complexes in the cytoplasm before intraflagellar transport loads them for the ciliary compartment. The sequence is that of Protein kintoun from Drosophila ananassae (Fruit fly).